The chain runs to 868 residues: mRNA-capping enzyme (868 aa).

K282 acts as the N6-GMP-lysine intermediate in catalysis. The mRNA cap 0 methyltransferase domain occupies 594 to 868 (GIYRAQTALI…LFGFICLRKN (275 aa)). S-adenosyl-L-methionine is bound by residues K607, G624, D646, and 710-712 (LFI).

In the N-terminal section; belongs to the dsDNA virus mRNA guanylyltransferase family. The protein in the C-terminal section; belongs to the class I-like SAM-binding methyltransferase superfamily. mRNA cap 0 methyltransferase family. As to quaternary structure, part of the viral DNA-directed RNA polymerase that consists of 8 polII-like subunits (RPB1, RPB2, RPB3, RPB5, RPB6, RPB7, RPB9, RPB10), a capping enzyme and a termination factor.

The protein resides in the virion. The enzyme catalyses a 5'-end triphospho-ribonucleoside in mRNA + H2O = a 5'-end diphospho-ribonucleoside in mRNA + phosphate + H(+). It catalyses the reaction a 5'-end diphospho-ribonucleoside in mRNA + GTP + H(+) = a 5'-end (5'-triphosphoguanosine)-ribonucleoside in mRNA + diphosphate. It carries out the reaction a 5'-end (5'-triphosphoguanosine)-ribonucleoside in mRNA + S-adenosyl-L-methionine = a 5'-end (N(7)-methyl 5'-triphosphoguanosine)-ribonucleoside in mRNA + S-adenosyl-L-homocysteine. The protein operates within mRNA processing; mRNA capping. Probably catalyzes the second reaction in the mRNA cap formation pathway. Forms a covalent complex with GTP. The polypeptide is mRNA-capping enzyme (Ornithodoros (relapsing fever ticks)).